We begin with the raw amino-acid sequence, 1946 residues long: MNNLFKFLFVLLAIFCPPISDLVVSHGVPQQHITIIKFTTNFAFRTTFYKTSSSSIVIGEKITLGTLTFGDGSSTSVRASVTSFDTKNDWFFGQFIFTKTYTALTPNNSKQYLAMFTSCCRISTLLNNKDADWNITSSVYLDNKNWPSVNHSPVSGMLPIVQVIANKNNNFRVIASDPNVDDKLSFSFSTVYPMTQPSGMKINSTGHVFFLPTSVGLYSTQIYITDDAVPPAYAVVDFILESITEPGKCDPSCSNGGATCNGNSECKNCANAGSTTSNTCSTTNYPPYFVSPTPQDNQLIPFTVGQPNSITLSCKSDYTTRTVGIQAANVPAGAAIAEGTSSQGTVKNILSWTPVAANVGVYVTSIFCYDSNGLTSSSRSFTIFIAKPECGNGHKDPSTGKCKCDGDKWDPTSNCFDCSTGYYGQNCDPTPPCDKGIPNEGILGDGKCMCINGYSGDKCDVPLSQSCKDLKNSILLSTSVPSFFVNPTKVQLYIESDFALTTSLNIPQKLTKIDVFVLVDVNVASSTLFGVVQSSISTFVTEVSKSICETTQFGIGYFSDASSSGFNFAPGSIIGSNIVNTINGYAVSSYTSTSSGNSLLGATNAASNSNGWNSGSFKAIVVLTDKDHSSNSAAITNFVNTYISNSIAPVVVGFGASSIPNWNSAISTADFGYSTVSAATSIDISAKAVAGLKSVLSNVVYKTDNTTNGASFVKSTPSDVAVSSTADTVKTVSGLVLTKPSATSIVSPVASVSAIGFGQTDFSINYNRPPTPTGTAFSVNQNSFATFKLTGTDPDFNILTFAFTTFLTSDVGVITDSNNKDVSTQKSKYYDSTETFTFTPAINYLLPISVSFVANDGCLNSTTSATVSITINKVNQLPTCQQKTISPTLNVANKFVLSASDFEDATPFIQFTSPTDLTAYGTLTFGGVAVTSTSKIPTSSEITFTQTVNPTNAIDVPVSFQAVDSVGAISTSTCTLTVKLVHTNIKPVSSSTSPISVIPRGSVSLTLVSTDSDSTSAKFTIKSVNKGAKGDFYTCSTNDCTCNSTQTNIYTSISTTTTYTSISYTNKVANKLICFTNGEPSAISNYASISFTSTDNQGLESDSVNVVVNIVGNRTNVAPVVTKIQGYSVYQDYLDSDAHVVTGTDADIDDYNPPNVNNLIAIITTPPSNGILVTLQNGSIAATQGKAPFTHYYRPNPGFKGTDSYSYQVVDTFKAGSSIESTTVTVNPINHKPSVVVSSYSFTSQSGDGETQDLVTSDPDGDSVICSVVSIPSQIGMYDSDGNLIESVPTVLSGTSYSFKLLDPSKITPTPFTSVSSSFAVKCTDVTTKTIPFGTLSTGVVTANVQYTYINTPPTTQGGTVQLDQDTVKVFTFNGSDIETPKDDIKVKILSLPINGQLLINATGVALTTTNIASETYNLNALSYKPNAGLSNWNTIDQQSPLDSISYTVIDQQGLTSDSDIVYFSVRPRNPPVYTGARVIDVLQNTRYPLTITSRIGGGGSEVNIQVIGFTNNGTLSIAHNMGSEGTMDSEITSYPNQQSGSTSYNYAYMPPRNKYGNDFDFIYFKLFDGDLYSELYTVTVNVIHVNQPPTIELVSYKILDGVSSEVLFENTSLINMNINTTVLIKYSGNDIDVDQVTPLISMIPNFPLRGSLYAYNPTASNSSGAPITRNSSNVEQNADGFYYVVFVPSKKTSGESYARITFIMTDNGGLNSPIVGVLINVNTVNIAPFVIIGNKNYTTQTNLTASVMGVQFDDPDSTTNNVSIVVSIVGQKDDKVASLKDIKLSFTQSPMCEYHQTLASITCIGPKKPLNSSIVSISVIASTAGDYRLKLFVDDLGYNAPSAIRAQSHLNATGYVDVKVNAPEATTQTTNNKTVLTGAIAGAAAGTALIAAAAWKLLRKAAPPTDTFFSEAAFLGDGVNANPLYEQSASAAENPLYQSASDNTD.

Positions 1 to 22 (MNNLFKFLFVLLAIFCPPISDL) are cleaved as a signal peptide. At 23–1875 (VVSHGVPQQH…ATTQTTNNKT (1853 aa)) the chain is on the extracellular side. N-linked (GlcNAc...) asparagine glycosylation is found at asparagine 107, asparagine 134, and asparagine 203. The EGF-like domain maps to 423 to 460 (YGQNCDPTPPCDKGIPNEGILGDGKCMCINGYSGDKCD). 2 disulfides stabilise this stretch: cysteine 433–cysteine 448 and cysteine 450–cysteine 459. In terms of domain architecture, VWFA spans 514–699 (DVFVLVDVNV…AGLKSVLSNV (186 aa)). Residues asparagine 705, asparagine 860, asparagine 1043, asparagine 1113, asparagine 1177, asparagine 1374, asparagine 1401, asparagine 1513, asparagine 1611, asparagine 1620, asparagine 1662, asparagine 1671, asparagine 1737, asparagine 1743, asparagine 1762, asparagine 1812, asparagine 1852, and asparagine 1873 are each glycosylated (N-linked (GlcNAc...) asparagine). The chain crosses the membrane as a helical span at residues 1876–1896 (VLTGAIAGAAAGTALIAAAAW). Residues 1897-1946 (KLLRKAAPPTDTFFSEAAFLGDGVNANPLYEQSASAAENPLYQSASDNTD) are Cytoplasmic-facing.

Belongs to the SIB family. In terms of assembly, interacts with talA/talin.

The protein resides in the membrane. Its function is as follows. Implicated in cellular adhesion. The sequence is that of Integrin beta-like protein E (sibE) from Dictyostelium discoideum (Social amoeba).